The following is a 98-amino-acid chain: MQTLSFLLALLFLVAQTPAQPTGEGEKGGTIQEPEATEAQDTAAVLMAAGAADGDDSDTKQLDTTFCRCRVSCNILEKYSGKCELSGRTARICCRKIK.

The first 19 residues, 1 to 19 (MQTLSFLLALLFLVAQTPA), serve as a signal peptide directing secretion. Positions 20–62 (QPTGEGEKGGTIQEPEATEAQDTAAVLMAAGAADGDDSDTKQL) are excised as a propeptide. Cystine bridges form between Cys67/Cys94, Cys69/Cys83, and Cys73/Cys93. Positions 97–98 (IK) are excised as a propeptide.

It belongs to the alpha-defensin family. Highly expressed in intestine, and expressed at lower levels in lung and spleen.

Its subcellular location is the secreted. Its function is as follows. Has antimicrobial activity. The protein is Defensin-A1 of Ornithorhynchus anatinus (Duckbill platypus).